The chain runs to 566 residues: 5'-AMP-activated protein kinase subunit gamma-2 (566 aa).

Residues 1-198 form a disordered region; that stretch reads MGSAAMDTKK…SRIYASSSPP (198 aa). Residues 15–25 are compositionally biased toward low complexity; that stretch reads SSPGGSSGKKN. The segment covering 54-64 has biased composition (basic and acidic residues); sequence NSEKHSSRKVD. Phosphoserine is present on residues serine 65, serine 71, serine 73, serine 90, serine 138, serine 143, serine 158, serine 161, and serine 162. 2 stretches are compositionally biased toward low complexity: residues 132–144 and 156–172; these read KESS…STSP and TSSV…VTKQ. At threonine 165 the chain carries Phosphothreonine. Residues 180–189 show a composition bias toward basic and acidic residues; that stretch reads YKQEPERPES. Serine 196 is modified (phosphoserine). 3 CBS domains span residues 272–332, 354–412, and 427–489; these read PTSS…KSPM, TFKP…MSDM, and IGTY…NLDI. Residues arginine 299, 314 to 319, valine 359, 380 to 381, and lysine 399 each bind ADP; these read MLTITD and HR. AMP-binding positions include arginine 299, 314-319, valine 359, histidine 380, 380-381, lysine 399, threonine 429, alanine 434, 455-456, 471-474, arginine 498, histidine 527, 527-528, and 543-546; these read MLTITD, HR, SA, SKFD, and SLSD. ATP is bound by residues arginine 299, 314–319, valine 359, 380–381, arginine 381, and lysine 399; these read MLTITD and HR. Residues 367–388 carry the AMPK pseudosubstrate motif; it reads LFDAVYSLIKNKIHRLPVIDPI. ADP contacts are provided by residues 471–474, arginine 498, and 527–528; these read SKFD and HR. ATP-binding positions include 471-474, arginine 498, and 527-528; these read SKFD and HR. Residues 501-559 form the CBS 4 domain; the sequence is YFEGVVKCSKLETLETIVDRIVRAEVHRLVVVNEADSIVGIISLSDILQALILTPAGAK.

The protein belongs to the 5'-AMP-activated protein kinase gamma subunit family. AMPK is a heterotrimer of an alpha catalytic subunit (PRKAA1 or PRKAA2), a beta (PRKAB1 or PRKAB2) and a gamma non-catalytic subunits (PRKAG1, PRKAG2 or PRKAG3). Interacts with FNIP1 and FNIP2. In terms of processing, phosphorylated by ULK1; leading to negatively regulate AMPK activity and suggesting the existence of a regulatory feedback loop between ULK1 and AMPK. Glycosylated; O-GlcNAcylated by OGT, promoting the AMP-activated protein kinase (AMPK) activity.

Functionally, AMP/ATP-binding subunit of AMP-activated protein kinase (AMPK), an energy sensor protein kinase that plays a key role in regulating cellular energy metabolism. In response to reduction of intracellular ATP levels, AMPK activates energy-producing pathways and inhibits energy-consuming processes: inhibits protein, carbohydrate and lipid biosynthesis, as well as cell growth and proliferation. AMPK acts via direct phosphorylation of metabolic enzymes, and by longer-term effects via phosphorylation of transcription regulators. Also acts as a regulator of cellular polarity by remodeling the actin cytoskeleton; probably by indirectly activating myosin. Gamma non-catalytic subunit mediates binding to AMP, ADP and ATP, leading to activate or inhibit AMPK: AMP-binding results in allosteric activation of alpha catalytic subunit (PRKAA1 or PRKAA2) both by inducing phosphorylation and preventing dephosphorylation of catalytic subunits. ADP also stimulates phosphorylation, without stimulating already phosphorylated catalytic subunit. ATP promotes dephosphorylation of catalytic subunit, rendering the AMPK enzyme inactive. This Mus musculus (Mouse) protein is 5'-AMP-activated protein kinase subunit gamma-2 (Prkag2).